The following is a 289-amino-acid chain: MAAETASGYIQHHLQNLTYGQLPDGSWGFAHSAAEAKAMGFWAFHLDTLGWSVALGLIFLLIFRMAAKKATSGQPGGLQNFVEVMVDFVNGSVKDSFHGRSPVIAPLALTIFVWVFLMNAVDLIPVDWIPQLAILISGDPHIPFRAVSTTDPNATLAMAFCVFALIIFYSIKVKGLGGFIGELTLHPFGSKNIFVQILLIPVNFLLEFVTLIAKPISLALRLFGNMYAGELVFILIAVMFGSGLLWLSGLGVVLQWAWAVFHILIITLQAFIFMMLTIVYLSMAHEDNH.

6 helical membrane passes run 43 to 63 (AFHL…LLIF), 104 to 124 (IAPL…VDLI), 160 to 180 (FCVF…GGFI), 193 to 213 (IFVQ…TLIA), 232 to 252 (VFIL…GLGV), and 259 to 279 (AVFH…LTIV).

This sequence belongs to the ATPase A chain family. In terms of assembly, F-type ATPases have 2 components, CF(1) - the catalytic core - and CF(0) - the membrane proton channel. CF(1) has five subunits: alpha(3), beta(3), gamma(1), delta(1), epsilon(1). CF(0) has three main subunits: a(1), b(2) and c(9-12). The alpha and beta chains form an alternating ring which encloses part of the gamma chain. CF(1) is attached to CF(0) by a central stalk formed by the gamma and epsilon chains, while a peripheral stalk is formed by the delta and b chains.

The protein localises to the cell inner membrane. Functionally, key component of the proton channel; it plays a direct role in the translocation of protons across the membrane. This Pseudomonas putida (strain ATCC 47054 / DSM 6125 / CFBP 8728 / NCIMB 11950 / KT2440) protein is ATP synthase subunit a.